The chain runs to 344 residues: Anthranilate phosphoribosyltransferase (344 aa).

Residues G81, 84–85 (GD), S89, 91–94 (NIST), 109–117 (KHGNRALSS), and A121 each bind 5-phospho-alpha-D-ribose 1-diphosphate. G81 lines the anthranilate pocket. Residue S93 coordinates Mg(2+). N112 is an anthranilate binding site. An anthranilate-binding site is contributed by R167. Mg(2+) contacts are provided by D226 and E227.

Belongs to the anthranilate phosphoribosyltransferase family. Homodimer. The cofactor is Mg(2+).

It catalyses the reaction N-(5-phospho-beta-D-ribosyl)anthranilate + diphosphate = 5-phospho-alpha-D-ribose 1-diphosphate + anthranilate. Its pathway is amino-acid biosynthesis; L-tryptophan biosynthesis; L-tryptophan from chorismate: step 2/5. Catalyzes the transfer of the phosphoribosyl group of 5-phosphorylribose-1-pyrophosphate (PRPP) to anthranilate to yield N-(5'-phosphoribosyl)-anthranilate (PRA). This Xanthobacter autotrophicus (strain ATCC BAA-1158 / Py2) protein is Anthranilate phosphoribosyltransferase.